A 505-amino-acid chain; its full sequence is Membrane-bound O-acyltransferase GUP1 (505 aa).

The Extracellular segment spans residues Met-1–Asn-217. The helical transmembrane segment at Phe-218–Thr-238 threads the bilayer. Residues Phe-239–Arg-266 are Cytoplasmic-facing. Residues Phe-267 to Ser-287 traverse the membrane as a helical segment. Residues Lys-288–Thr-296 lie on the Extracellular side of the membrane. A helical membrane pass occupies residues Pro-297–Ile-317. Topologically, residues Pro-318 to Arg-377 are cytoplasmic. The next 2 helical transmembrane spans lie at Ile-378–Leu-398 and Leu-399–Phe-419. His-392 is a catalytic residue. The Cytoplasmic portion of the chain corresponds to Lys-420–His-430. Residues Val-431 to Phe-451 form a helical membrane-spanning segment. The Extracellular segment spans residues Cys-452–Thr-464. Residues Leu-465–Gly-485 form a helical membrane-spanning segment. Residues Ser-486–Cys-505 lie on the Cytoplasmic side of the membrane.

Belongs to the membrane-bound acyltransferase family.

It localises to the cell membrane. Its subcellular location is the endoplasmic reticulum membrane. The protein resides in the mitochondrion membrane. In terms of biological role, membrane-bound O-acyltransferase involved in the remodeling of glycosylphosphatidylinositol (GPI) anchors. Acts only on GPI-anchored proteins, but not on free GPI lipids. Also involved in lipid metabolism, having profound effects on sphingolipid-sterol-ordered domains integrity and assembly. Involved in cell integrity and apoptosis. The chain is Membrane-bound O-acyltransferase GUP1 (GUP1) from Millerozyma farinosa (Yeast).